Reading from the N-terminus, the 425-residue chain is tRNA(Met) cytidine acetate ligase (425 aa).

ATP is bound by residues 7-20, G102, N162, and 187-188; these read VVEY…HLHH and RI.

It belongs to the TmcAL family.

It localises to the cytoplasm. It carries out the reaction cytidine(34) in elongator tRNA(Met) + acetate + ATP = N(4)-acetylcytidine(34) in elongator tRNA(Met) + AMP + diphosphate. Catalyzes the formation of N(4)-acetylcytidine (ac(4)C) at the wobble position of elongator tRNA(Met), using acetate and ATP as substrates. First activates an acetate ion to form acetyladenylate (Ac-AMP) and then transfers the acetyl group to tRNA to form ac(4)C34. In Fervidobacterium nodosum (strain ATCC 35602 / DSM 5306 / Rt17-B1), this protein is tRNA(Met) cytidine acetate ligase.